We begin with the raw amino-acid sequence, 246 residues long: Small ribosomal subunit protein uS2 (246 aa).

Belongs to the universal ribosomal protein uS2 family.

The protein is Small ribosomal subunit protein uS2 of Azotobacter vinelandii (strain DJ / ATCC BAA-1303).